The sequence spans 33 residues: Photosystem II reaction center protein Psb30 (33 aa).

A helical membrane pass occupies residues 5 to 25; it reads ILAQLTALAFIVVSGPLVIAL.

It belongs to the Psb30/Ycf12 family. As to quaternary structure, PSII is composed of 1 copy each of membrane proteins PsbA, PsbB, PsbC, PsbD, PsbE, PsbF, PsbH, PsbI, PsbJ, PsbK, PsbL, PsbM, PsbT, PsbX, PsbY, PsbZ, Psb30/Ycf12, peripheral proteins of the oxygen-evolving complex and a large number of cofactors. It forms dimeric complexes.

Its subcellular location is the plastid. The protein localises to the chloroplast thylakoid membrane. A core subunit of photosystem II (PSII), probably helps stabilize the reaction center. The protein is Photosystem II reaction center protein Psb30 of Chaetosphaeridium globosum (Charophycean green alga).